We begin with the raw amino-acid sequence, 511 residues long: Cytochrome P450 monooxygenase esdpI (511 aa).

The helical transmembrane segment at 14–34 (VRAGLAIGVAILAIIVLFPGI) threads the bilayer. Cysteine 453 lines the heme pocket.

It belongs to the cytochrome P450 family. The cofactor is heme.

Its subcellular location is the membrane. Its pathway is secondary metabolite biosynthesis; terpenoid biosynthesis. In terms of biological role, cytochrome P450 monooxygenase; part of the cluster that mediates the biosynthesis of shearones, diterpenoid pyrones (DPs) which are structurally diverse meroterpenoids consisting of a diterpene linked by a pyrone, and which may exhibit a range of bioactivities. Whitin the pathway, esdpI takes part in the molecular scaffold modification via the hydroxylation at C-20 and can transform shearone C into shearone G. The molecular scaffold is commonly biosynthesized by a series of enzymes including the non-reducing polyketide synthase (NR-PKS) esdpA that generates an alpha-pyrone; the prenyltransferase esdpC that attaches a geranylgeranyl pyrophosphate (GGPP) produced by the GGPP synthase (GGPPS) esdpD onto the pyrone unit; the FAD-dependent monooxygenase esdpE that converts an olefin on the diterpene unit into an epoxide; and the terpene cyclase esdpB that catalyzes the cyclization reactions to give the molecular backbone shearone A. In the modification steps, esdpF oxidizes the hydroxy group to a ketone at C-3 and esdpG then attaches hydroxy groups at both C-11 and C-12. After that, esdpI hydroxylates at C-20 and esdpH hydroxylates at C-6'. The ether bridge is generated by nucleophilic attack of the hydroxy group at C-20 to the carbonyl carbon at C-3. EsdpH can also functions prior to esdpI. The different combinations of these modification enzymes lead to the production of diverse shearone derivatives, shearone I being the end product of the pathway. The alpha-ketoglutarate-dependent dioxygenase esdpJ seems not to be involved in this pathway. This Penicillium shearii (Eupenicillium shearii) protein is Cytochrome P450 monooxygenase esdpI.